The following is a 456-amino-acid chain: tRNA modification GTPase MnmE (456 aa).

(6S)-5-formyl-5,6,7,8-tetrahydrofolate is bound by residues Lys-29, Glu-87, and Arg-126. The TrmE-type G domain occupies 222–380 (GYKLAIIGRP…LLSLLASWLD (159 aa)). Asn-232 contributes to the K(+) binding site. GTP is bound by residues 232-237 (NVGKSS), 251-257 (SDIPGTT), and 276-279 (DTAG). Residue Ser-236 coordinates Mg(2+). Positions 251, 253, and 256 each coordinate K(+). Mg(2+) is bound at residue Thr-257. A (6S)-5-formyl-5,6,7,8-tetrahydrofolate-binding site is contributed by Lys-456.

The protein belongs to the TRAFAC class TrmE-Era-EngA-EngB-Septin-like GTPase superfamily. TrmE GTPase family. In terms of assembly, homodimer. Heterotetramer of two MnmE and two MnmG subunits. Requires K(+) as cofactor.

It is found in the cytoplasm. In terms of biological role, exhibits a very high intrinsic GTPase hydrolysis rate. Involved in the addition of a carboxymethylaminomethyl (cmnm) group at the wobble position (U34) of certain tRNAs, forming tRNA-cmnm(5)s(2)U34. The chain is tRNA modification GTPase MnmE from Wolinella succinogenes (strain ATCC 29543 / DSM 1740 / CCUG 13145 / JCM 31913 / LMG 7466 / NCTC 11488 / FDC 602W) (Vibrio succinogenes).